We begin with the raw amino-acid sequence, 506 residues long: Anaerobic nitric oxide reductase transcription regulator NorR (506 aa).

The residue at position 57 (D57) is a 4-aspartylphosphate. The 230-residue stretch at 187-416 folds into the Sigma-54 factor interaction domain; it reads MIGLSPAMTQ…LEHAIHRAVV (230 aa). Residues 215-222 and 278-287 contribute to the ATP site; these read GETGTGKE and ADNGTLFLDE. Positions 481–500 form a DNA-binding region, H-T-H motif; sequence WAASARALETDVANLHRLAK.

It functions in the pathway nitrogen metabolism; nitric oxide reduction. Functionally, required for the expression of anaerobic nitric oxide (NO) reductase, acts as a transcriptional activator for at least the norVW operon. Activation also requires sigma-54. The protein is Anaerobic nitric oxide reductase transcription regulator NorR of Salmonella paratyphi C (strain RKS4594).